The sequence spans 958 residues: Protein translocase subunit SecA (958 aa).

ATP contacts are provided by residues Q87, 105–109 (GEGKT), and D524. The tract at residues 598–617 (RRIDNQLRGRSGRQGDPGRS) is disordered. Zn(2+) is bound by residues C939, C941, C950, and H951.

The protein belongs to the SecA family. In terms of assembly, monomer and homodimer. Part of the essential Sec protein translocation apparatus which comprises SecA, SecYEG and auxiliary proteins SecDF-YajC and YidC. Requires Zn(2+) as cofactor.

Its subcellular location is the cell inner membrane. It localises to the cytoplasm. It carries out the reaction ATP + H2O + cellular proteinSide 1 = ADP + phosphate + cellular proteinSide 2.. Functionally, part of the Sec protein translocase complex. Interacts with the SecYEG preprotein conducting channel. Has a central role in coupling the hydrolysis of ATP to the transfer of proteins into and across the cell membrane, serving both as a receptor for the preprotein-SecB complex and as an ATP-driven molecular motor driving the stepwise translocation of polypeptide chains across the membrane. The protein is Protein translocase subunit SecA of Methylobacterium sp. (strain 4-46).